Here is a 784-residue protein sequence, read N- to C-terminus: Alpha-catulin (784 aa).

Residues 35 to 247 (IKTKSIEQTL…LLLTASKTYL (213 aa)) form a vinculin/alpha-catenin homology 1 (VH1) region region. Residues 387–414 (ASGLEVTVERLNRRLKDLSKQLQIVAME) adopt a coiled-coil conformation. The vinculin/alpha-catenin homology 2 (VH2) region stretch occupies residues 552–696 (PRPGKHGTTQ…MVKSPTVGKT (145 aa)). Positions 737 to 784 (GSVNGRTGADGERTSRESTVWRRTPSIRRAAPPTSSHLSANNSSSIHI) are disordered. Basic and acidic residues predominate over residues 745-756 (ADGERTSRESTV). Positions 771 to 784 (SSHLSANNSSSIHI) are enriched in low complexity.

The protein belongs to the vinculin/alpha-catenin family. In terms of assembly, interacts with slo-1 (via C-terminus); the interaction is required for localization of slo-1 to dense bodies in body wall muscle cells. Interacts (via N-terminus) with dystrophin complex member dyb-1 (via C-terminus); the interaction is required for localization of the dystrophin complex and ctn-1 near dense bodies in muscle cells. As to expression, expressed in body wall muscles, vulval muscles, stomatointestinal cells and pharyngeal muscle cells. Expressed in enteric muscles, nerve ring neurons and in the ventral nerve cord.

The protein resides in the cytoplasm. Required for slo-1 potassium ion channel clustering at presynaptic terminals and in egg-laying muscles; clustering of slo-1 mediates the intoxicating and sedatory effects of ethanol on worms. Required for slo-1 localization to dense bodies in body wall muscle cells. Maintains the localization of the dystrophin complex near muscle cell dense bodies via its interaction with complex member dyb-1 which is required for slo-1 localization in muscle while slo-1 localization in neurons is independent of the dystrophin complex. The sequence is that of Alpha-catulin from Caenorhabditis elegans.